The primary structure comprises 87 residues: Keratin-associated protein 19-3 (87 aa).

A 23 X 2 AA repeats of G-[YCGS] region spans residues 9–82 (GGLGYGYGSF…RRPSCCGGYG (74 aa)).

The protein belongs to the KRTAP type 19 family. In terms of assembly, interacts with hair keratins. In terms of tissue distribution, strong expression in narrowly defined pattern restricted to the lower and middle cortical regions of the hair shaft in both developing and cycling hair. During hair follicle regression (catagen), expression levels decrease until expression is no longer detectable in follicles at resting stage (telogen).

Its function is as follows. In the hair cortex, hair keratin intermediate filaments are embedded in an interfilamentous matrix, consisting of hair keratin-associated proteins (KRTAP), which are essential for the formation of a rigid and resistant hair shaft through their extensive disulfide bond cross-linking with abundant cysteine residues of hair keratins. The matrix proteins include the high-sulfur and high-glycine-tyrosine keratins. The chain is Keratin-associated protein 19-3 (Krtap19-3) from Mus musculus (Mouse).